Reading from the N-terminus, the 427-residue chain is Adenylosuccinate synthetase (427 aa).

GTP is bound by residues Gly12 to Lys18 and Gly40 to Thr42. Asp13 serves as the catalytic Proton acceptor. Residues Asp13 and Gly40 each coordinate Mg(2+). IMP is bound by residues Asp13 to Lys16, Asn38 to His41, Thr131, Arg145, Gln226, Thr241, and Arg305. His41 acts as the Proton donor in catalysis. Residue Ala301–Arg307 participates in substrate binding. Residues Arg307, Lys333–Asp335, and Ser415–Gly417 each bind GTP.

The protein belongs to the adenylosuccinate synthetase family. As to quaternary structure, homodimer. Requires Mg(2+) as cofactor.

It localises to the cytoplasm. It carries out the reaction IMP + L-aspartate + GTP = N(6)-(1,2-dicarboxyethyl)-AMP + GDP + phosphate + 2 H(+). It functions in the pathway purine metabolism; AMP biosynthesis via de novo pathway; AMP from IMP: step 1/2. Its function is as follows. Plays an important role in the de novo pathway of purine nucleotide biosynthesis. Catalyzes the first committed step in the biosynthesis of AMP from IMP. This Oleidesulfovibrio alaskensis (strain ATCC BAA-1058 / DSM 17464 / G20) (Desulfovibrio alaskensis) protein is Adenylosuccinate synthetase.